The primary structure comprises 75 residues: MSSGGLLLLLGLLTLWAELTPVSGQDRPVKPGLCPPRPQKPPCVKECKNDWSCRGEQKCCHYGCIYECRDPIFVK.

The signal sequence occupies residues 1–24 (MSSGGLLLLLGLLTLWAELTPVSG). Positions 27–72 (RPVKPGLCPPRPQKPPCVKECKNDWSCRGEQKCCHYGCIYECRDPI) constitute a WAP domain. Intrachain disulfides connect C34–C60, C43–C64, C47–C59, and C53–C68.

This sequence belongs to the venom waprin family. In terms of tissue distribution, expressed by the venom gland.

The protein localises to the secreted. Functionally, damages membranes of susceptible bacteria. Has no hemolytic activity. Not toxic to mice. Does not inhibit the proteinases elastase and cathepsin G. This Pseudechis porphyriacus (Red-bellied black snake) protein is Porwaprin-b.